The sequence spans 235 residues: Coiled-coil domain-containing protein 71L (235 aa).

The span at 1-13 shows a compositional bias: basic residues; that stretch reads MRRSMKRRRRRRP. Positions 1-30 are disordered; the sequence is MRRSMKRRRRRRPVAPATAARGGDFRAEDG. Phosphoserine occurs at positions 52 and 89. A disordered region spans residues 109–167; sequence PDPPGPPTARGQARRPVPRAAARRRRRGARAAAARRRKPRPPPPPPPPPEESCPAKPVA. Residues 120-148 are compositionally biased toward basic residues; that stretch reads QARRPVPRAAARRRRRGARAAAARRRKPR. Residues 149-159 are compositionally biased toward pro residues; sequence PPPPPPPPPEE. T185 bears the Phosphothreonine mark. At S198 the chain carries Phosphoserine.

The chain is Coiled-coil domain-containing protein 71L (CCDC71L) from Homo sapiens (Human).